A 1380-amino-acid polypeptide reads, in one-letter code: DNA-directed RNA polymerase subunit beta (1380 aa).

This sequence belongs to the RNA polymerase beta chain family. The RNAP catalytic core consists of 2 alpha, 1 beta, 1 beta' and 1 omega subunit. When a sigma factor is associated with the core the holoenzyme is formed, which can initiate transcription.

It carries out the reaction RNA(n) + a ribonucleoside 5'-triphosphate = RNA(n+1) + diphosphate. Its function is as follows. DNA-dependent RNA polymerase catalyzes the transcription of DNA into RNA using the four ribonucleoside triphosphates as substrates. This Sinorhizobium fredii (strain NBRC 101917 / NGR234) protein is DNA-directed RNA polymerase subunit beta.